We begin with the raw amino-acid sequence, 146 residues long: Snaclec agkicetin-C subunit beta (146 aa).

Positions 1 to 23 (MGRFIFVSFGLLVVFLSLSGTGA) are cleaved as a signal peptide. 3 disulfides stabilise this stretch: Cys25–Cys36, Cys53–Cys142, and Cys119–Cys134. The 112-residue stretch at 32-143 (YEGNCYLVVK…CSRTQPFVCK (112 aa)) folds into the C-type lectin domain.

Belongs to the snaclec family. In terms of assembly, heterodimer of subunits alpha and beta; disulfide-linked. Expressed by the venom gland.

The protein resides in the secreted. Its function is as follows. Is a potent glycoprotein Ibalpha (GP1BA) antagonist. Concentration-dependently inhibits botrocetin-, ristocetin- and low dose thrombin-induced platelet aggregation. Inhibits platelet adhesion only through inhibiting the vWF interaction with GP1BA, but has minimal effect on other platelet receptors, such as alpha-IIb/beta-3 (ITGA2B/ITGB3) or alpha-2/beta-1 (ITGA2/ITGB1). Causes an instant severe thrombocytopenia in rats and is not lethal to mice. This chain is Snaclec agkicetin-C subunit beta, found in Deinagkistrodon acutus (Hundred-pace snake).